Reading from the N-terminus, the 357-residue chain is Glutamate 5-kinase (357 aa).

An ATP-binding site is contributed by K7. Substrate-binding residues include S43, D130, and N142. ATP is bound by residues 162 to 163 (TD) and 205 to 211 (TGGMTTK). Residues 270-353 (EGELQLDAGA…PVVVHRDGLV (84 aa)) enclose the PUA domain.

This sequence belongs to the glutamate 5-kinase family.

The protein localises to the cytoplasm. It carries out the reaction L-glutamate + ATP = L-glutamyl 5-phosphate + ADP. Its pathway is amino-acid biosynthesis; L-proline biosynthesis; L-glutamate 5-semialdehyde from L-glutamate: step 1/2. Catalyzes the transfer of a phosphate group to glutamate to form L-glutamate 5-phosphate. In Synechococcus sp. (strain CC9605), this protein is Glutamate 5-kinase.